A 133-amino-acid chain; its full sequence is MERTFVALKPDTVERKLVGRVIQRFEDRGFEIVEMRMLTLTMEMAEEYYGEHKGKEFYERLIKFMTSGRIVAMVIKGERAISTVRKMLGNTCPCDAEPGTIRGDFGLYTPANIIHASDSLESAEREIDLFFGR.

Positions 9, 57, 85, 91, 102, and 112 each coordinate ATP. Catalysis depends on His115, which acts as the Pros-phosphohistidine intermediate.

The protein belongs to the NDK family. It depends on Mg(2+) as a cofactor.

The protein localises to the cytoplasm. The enzyme catalyses a 2'-deoxyribonucleoside 5'-diphosphate + ATP = a 2'-deoxyribonucleoside 5'-triphosphate + ADP. It carries out the reaction a ribonucleoside 5'-diphosphate + ATP = a ribonucleoside 5'-triphosphate + ADP. Its function is as follows. Major role in the synthesis of nucleoside triphosphates other than ATP. The ATP gamma phosphate is transferred to the NDP beta phosphate via a ping-pong mechanism, using a phosphorylated active-site intermediate. The protein is Nucleoside diphosphate kinase of Methanococcus maripaludis (strain DSM 14266 / JCM 13030 / NBRC 101832 / S2 / LL).